We begin with the raw amino-acid sequence, 151 residues long: UPF0178 protein Suden_0449 (151 aa).

It belongs to the UPF0178 family.

The protein is UPF0178 protein Suden_0449 of Sulfurimonas denitrificans (strain ATCC 33889 / DSM 1251) (Thiomicrospira denitrificans (strain ATCC 33889 / DSM 1251)).